Reading from the N-terminus, the 549-residue chain is mRNA-capping enzyme subunit beta (549 aa).

S2 carries the N-acetylserine modification. S15 is subject to Phosphoserine. Residues 30–169 (LQKLSEAANG…QGNEGNIASN (140 aa)) form a disordered region. The span at 86-96 (DDEETDTDDEM) shows a compositional bias: acidic residues. Phosphoserine is present on S124. Positions 135-157 (AKLEKPSDDSIHQNSKSDEEQRI) are enriched in basic and acidic residues. K223 acts as the N6-GMP-lysine intermediate in catalysis.

The protein belongs to the fungal TPase family. As to quaternary structure, heterodimer. The mRNA-capping enzyme is composed of two separate chains alpha and beta, respectively a mRNA guanylyltransferase and an mRNA 5'-triphosphate monophosphatase. Mg(2+) is required as a cofactor.

It localises to the nucleus. It catalyses the reaction a 5'-end triphospho-ribonucleoside in mRNA + H2O = a 5'-end diphospho-ribonucleoside in mRNA + phosphate + H(+). Its function is as follows. First step of mRNA capping. Converts the 5'-triphosphate end of a nascent mRNA chain into a diphosphate end. The sequence is that of mRNA-capping enzyme subunit beta (CET1) from Saccharomyces cerevisiae (strain ATCC 204508 / S288c) (Baker's yeast).